Here is a 1621-residue protein sequence, read N- to C-terminus: Lysophospholipase NTE1 (1621 aa).

Over 1–12 (MSSIPTPPDANG) the chain is Cytoplasmic. A helical membrane pass occupies residues 13 to 33 (NPLIALAVAVIYAILYVLQGV). Residues 34 to 59 (KYGVSLLTIGIPSCIVRMLQYSLTIS) are Lumenal-facing. Residues 60-80 (LGFPHLLALFAGALLALFFLI) traverse the membrane as a helical segment. The Cytoplasmic segment spans residues 81–1621 (RYRYLTRYAQ…RGNRLRRMSI (1541 aa)). Disordered regions lie at residues 188-209 (PDAS…TRPS), 250-379 (EGEE…SVPR), 545-566 (QTAT…LDET), 648-667 (WNLN…QRDD), 711-735 (VSAL…GSTR), 772-791 (DDEA…GASG), and 839-870 (FRST…ERPF). 2 stretches are compositionally biased toward low complexity: residues 195-209 (TPTP…TRPS) and 348-361 (RRSQ…RLNS). Residues 788-907 (GASG…GYLS) and 951-1070 (RLLS…IAGR) each bind a nucleoside 3',5'-cyclic phosphate. Residues 839–867 (FRSTSSNQENPNSTPGSKHRQSSFGSSNE) show a composition bias toward polar residues. The PNPLA domain maps to 1316-1480 (LVLGGGGARG…MDNTPIQPLR (165 aa)). The GXGXXG signature appears at 1320–1325 (GGGARG). A GXSXG motif is present at residues 1347-1351 (GCSIG). The active-site Nucleophile is Ser-1349. The active-site Proton acceptor is Asp-1467. A DGA/G motif is present at residues 1467–1469 (DGG).

This sequence belongs to the NTE family.

It localises to the endoplasmic reticulum membrane. The enzyme catalyses a 1-acyl-sn-glycero-3-phosphocholine + H2O = sn-glycerol 3-phosphocholine + a fatty acid + H(+). Inhibited by organophosphorus esters. In terms of biological role, intracellular phospholipase B that catalyzes the double deacylation of phosphatidylcholine (PC) to glycerophosphocholine (GroPCho). Plays an important role in membrane lipid homeostasis. Responsible for the rapid PC turnover in response to inositol, elevated temperatures, or when choline is present in the growth medium. The protein is Lysophospholipase NTE1 (NTE1) of Cryptococcus neoformans var. neoformans serotype D (strain B-3501A) (Filobasidiella neoformans).